Consider the following 145-residue polypeptide: Probable low molecular weight protein-tyrosine-phosphatase EpsP (145 aa).

Residue Cys-9 is the Nucleophile of the active site. The active site involves Arg-15. Asp-114 acts as the Proton donor in catalysis.

The protein belongs to the low molecular weight phosphotyrosine protein phosphatase family.

It carries out the reaction O-phospho-L-tyrosyl-[protein] + H2O = L-tyrosyl-[protein] + phosphate. It participates in glycan metabolism; exopolysaccharide biosynthesis. Functionally, may be involved in assembly or function of the EPS I polymerization/export complex and/or the EpsB ATPase. Alternatively it may function in the removal of the terminal phosphate from C55-isoprenyl pyrophosphate in order to recycle the C55-isoprenyl phosphate lipid carrier used in the synthesis of polysaccharide repeat units. The sequence is that of Probable low molecular weight protein-tyrosine-phosphatase EpsP (epsP) from Ralstonia nicotianae (strain ATCC BAA-1114 / GMI1000) (Ralstonia solanacearum).